The sequence spans 117 residues: Immunoglobulin heavy variable 1-45 (117 aa).

Residues 1–19 (MDWTWRILFLVAAVTDAYS) form the signal peptide. The segment at 20–44 (QMQLVQSGAEVKKTGSSVKVSCKAS) is framework-1. The region spanning 20–117 (QMQLVQSGAE…EDTAMYYCAR (98 aa)) is the Ig-like domain. C41 and C115 form a disulfide bridge. The complementarity-determining-1 stretch occupies residues 45–52 (GYTFTYRY). Residues 53-69 (LHWVRQAPGQALEWMGW) are framework-2. Positions 70–77 (ITPFNGNT) are complementarity-determining-2. The segment at 78–115 (NYAQKFQDRVTITRDRSMSTAYMELSSLRSEDTAMYYC) is framework-3. The segment at 116 to 117 (AR) is complementarity-determining-3.

In terms of assembly, immunoglobulins are composed of two identical heavy chains and two identical light chains; disulfide-linked.

Its subcellular location is the secreted. The protein localises to the cell membrane. Functionally, v region of the variable domain of immunoglobulin heavy chains that participates in the antigen recognition. Immunoglobulins, also known as antibodies, are membrane-bound or secreted glycoproteins produced by B lymphocytes. In the recognition phase of humoral immunity, the membrane-bound immunoglobulins serve as receptors which, upon binding of a specific antigen, trigger the clonal expansion and differentiation of B lymphocytes into immunoglobulins-secreting plasma cells. Secreted immunoglobulins mediate the effector phase of humoral immunity, which results in the elimination of bound antigens. The antigen binding site is formed by the variable domain of one heavy chain, together with that of its associated light chain. Thus, each immunoglobulin has two antigen binding sites with remarkable affinity for a particular antigen. The variable domains are assembled by a process called V-(D)-J rearrangement and can then be subjected to somatic hypermutations which, after exposure to antigen and selection, allow affinity maturation for a particular antigen. This Homo sapiens (Human) protein is Immunoglobulin heavy variable 1-45.